The primary structure comprises 197 residues: Proteasome subunit beta 1 (197 aa).

Residues 1–6 constitute a propeptide, removed in mature form; by autocatalysis; that stretch reads MNRKTG. The Nucleophile role is filled by Thr7.

Belongs to the peptidase T1B family. As to quaternary structure, the 20S proteasome core is composed of 14 alpha and 14 beta subunits that assemble into four stacked heptameric rings, resulting in a barrel-shaped structure. The two inner rings, each composed of seven catalytic beta subunits, are sandwiched by two outer rings, each composed of seven alpha subunits. The catalytic chamber with the active sites is on the inside of the barrel. Has a gated structure, the ends of the cylinder being occluded by the N-termini of the alpha-subunits. Is capped at one or both ends by the proteasome regulatory ATPase, PAN.

The protein resides in the cytoplasm. It catalyses the reaction Cleavage of peptide bonds with very broad specificity.. Its activity is regulated as follows. The formation of the proteasomal ATPase PAN-20S proteasome complex, via the docking of the C-termini of PAN into the intersubunit pockets in the alpha-rings, triggers opening of the gate for substrate entry. Interconversion between the open-gate and close-gate conformations leads to a dynamic regulation of the 20S proteasome proteolysis activity. Its function is as follows. Component of the proteasome core, a large protease complex with broad specificity involved in protein degradation. The chain is Proteasome subunit beta 1 from Pyrococcus abyssi (strain GE5 / Orsay).